The primary structure comprises 355 residues: D-alanine--D-alanine ligase (355 aa).

The 208-residue stretch at 143–350 (KKIFSHLEIP…IDQLVAKLVD (208 aa)) folds into the ATP-grasp domain. Residue 178-233 (IEKLKLPVFVKPANSGSSLGISKAKTRSEIIKALQKAWEIDSRIVIEEGLDVRELE) participates in ATP binding. Positions 303, 317, and 319 each coordinate Mg(2+).

It belongs to the D-alanine--D-alanine ligase family. Mg(2+) is required as a cofactor. The cofactor is Mn(2+).

It is found in the cytoplasm. It catalyses the reaction 2 D-alanine + ATP = D-alanyl-D-alanine + ADP + phosphate + H(+). It functions in the pathway cell wall biogenesis; peptidoglycan biosynthesis. Cell wall formation. This is D-alanine--D-alanine ligase from Prochlorococcus marinus subsp. pastoris (strain CCMP1986 / NIES-2087 / MED4).